We begin with the raw amino-acid sequence, 522 residues long: Ribonuclease Y (522 aa).

Residues 7-27 (STILYCLFFFFLGIAAVLAFI) form a helical membrane-spanning segment. The KH domain occupies 212–272 (TTSTVGVPTD…VRREVARMSL (61 aa)). Positions 338-431 (VLRHSVEVAF…VATADACSAS (94 aa)) constitute an HD domain.

It belongs to the RNase Y family.

It is found in the cell membrane. In terms of biological role, endoribonuclease that initiates mRNA decay. This Rhodopirellula baltica (strain DSM 10527 / NCIMB 13988 / SH1) protein is Ribonuclease Y.